The following is a 453-amino-acid chain: Ribosomal protein uS12 methylthiotransferase RimO (453 aa).

The 116-residue stretch at 9–124 (PKVGFVSLGC…VMEAVHTHLP (116 aa)) folds into the MTTase N-terminal domain. The [4Fe-4S] cluster site is built by C18, C54, C83, C155, C159, and C162. The Radical SAM core domain maps to 141–382 (LTPKHYAYLK…MEVAERVSAR (242 aa)). The 69-residue stretch at 385-453 (QRKVGKTLRV…ADGHDLWGEV (69 aa)) folds into the TRAM domain.

It belongs to the methylthiotransferase family. RimO subfamily. It depends on [4Fe-4S] cluster as a cofactor.

It localises to the cytoplasm. The catalysed reaction is L-aspartate(89)-[ribosomal protein uS12]-hydrogen + (sulfur carrier)-SH + AH2 + 2 S-adenosyl-L-methionine = 3-methylsulfanyl-L-aspartate(89)-[ribosomal protein uS12]-hydrogen + (sulfur carrier)-H + 5'-deoxyadenosine + L-methionine + A + S-adenosyl-L-homocysteine + 2 H(+). Functionally, catalyzes the methylthiolation of an aspartic acid residue of ribosomal protein uS12. This Ralstonia nicotianae (strain ATCC BAA-1114 / GMI1000) (Ralstonia solanacearum) protein is Ribosomal protein uS12 methylthiotransferase RimO.